Here is a 317-residue protein sequence, read N- to C-terminus: Ribosomal protein L11 methyltransferase (317 aa).

Positions 158, 179, 201, and 244 each coordinate S-adenosyl-L-methionine.

This sequence belongs to the methyltransferase superfamily. PrmA family.

The protein localises to the cytoplasm. The enzyme catalyses L-lysyl-[protein] + 3 S-adenosyl-L-methionine = N(6),N(6),N(6)-trimethyl-L-lysyl-[protein] + 3 S-adenosyl-L-homocysteine + 3 H(+). Its function is as follows. Methylates ribosomal protein L11. The chain is Ribosomal protein L11 methyltransferase from Streptococcus pyogenes serotype M49 (strain NZ131).